The chain runs to 361 residues: Uroporphyrinogen decarboxylase (361 aa).

Substrate is bound by residues 27 to 31 (RQAGR), D77, Y154, T209, and H327.

This sequence belongs to the uroporphyrinogen decarboxylase family. As to quaternary structure, homodimer.

It localises to the cytoplasm. It catalyses the reaction uroporphyrinogen III + 4 H(+) = coproporphyrinogen III + 4 CO2. It functions in the pathway porphyrin-containing compound metabolism; protoporphyrin-IX biosynthesis; coproporphyrinogen-III from 5-aminolevulinate: step 4/4. Catalyzes the decarboxylation of four acetate groups of uroporphyrinogen-III to yield coproporphyrinogen-III. In Coxiella burnetii (strain RSA 331 / Henzerling II), this protein is Uroporphyrinogen decarboxylase.